A 678-amino-acid polypeptide reads, in one-letter code: Probable N-methylproline demethylase (678 aa).

FMN is bound by residues G59, Q102, R220, K299, and 321–322 (TR). 3 residues coordinate [4Fe-4S] cluster: C345, C351, and C363. The FAD site is built by A396, E415, Q423, R433, and A460.

This sequence in the N-terminal section; belongs to the NADH:flavin oxidoreductase/NADH oxidase family. The cofactor is FMN. It depends on FAD as a cofactor. [4Fe-4S] cluster serves as cofactor.

The enzyme catalyses N-methyl-L-proline + NAD(+) + H2O = L-proline + formaldehyde + NADH + H(+). Its pathway is amine and polyamine degradation; stachydrine degradation. Possible NADH-dependent oxidase, may function as a demethylase that converts N-methylproline to proline. The protein is Probable N-methylproline demethylase of Rhizobium meliloti (strain 1021) (Ensifer meliloti).